Consider the following 303-residue polypeptide: Glyceraldehyde-3-phosphate dehydrogenase (303 aa).

Residues 6-7 (RI), Asp-28, Arg-72, and Thr-114 contribute to the NAD(+) site. Residues 143 to 145 (SCT), Thr-174, 203 to 204 (TG), and Arg-226 each bind D-glyceraldehyde 3-phosphate. The Nucleophile role is filled by Cys-144.

This sequence belongs to the glyceraldehyde-3-phosphate dehydrogenase family. As to quaternary structure, homotetramer.

Its subcellular location is the cytoplasm. It carries out the reaction D-glyceraldehyde 3-phosphate + phosphate + NAD(+) = (2R)-3-phospho-glyceroyl phosphate + NADH + H(+). Its pathway is carbohydrate degradation; glycolysis; pyruvate from D-glyceraldehyde 3-phosphate: step 1/5. Functionally, catalyzes the oxidative phosphorylation of glyceraldehyde 3-phosphate (G3P) to 1,3-bisphosphoglycerate (BPG) using the cofactor NAD. The first reaction step involves the formation of a hemiacetal intermediate between G3P and a cysteine residue, and this hemiacetal intermediate is then oxidized to a thioester, with concomitant reduction of NAD to NADH. The reduced NADH is then exchanged with the second NAD, and the thioester is attacked by a nucleophilic inorganic phosphate to produce BPG. This is Glyceraldehyde-3-phosphate dehydrogenase (gap) from Klebsiella pneumoniae.